A 338-amino-acid polypeptide reads, in one-letter code: Large ribosomal subunit protein uL10 (338 aa).

Residues 298–338 (TVQQSQSQQPAAEEKKEEKKEEEKKGPSEEEIASGLASLFG) are disordered. The span at 309-325 (AEEKKEEKKEEEKKGPS) shows a compositional bias: basic and acidic residues.

The protein belongs to the universal ribosomal protein uL10 family. In terms of assembly, part of the 50S ribosomal subunit. Forms part of the ribosomal stalk which helps the ribosome interact with GTP-bound translation factors. Forms a heptameric L10(L12)2(L12)2(L12)2 complex, where L10 forms an elongated spine to which the L12 dimers bind in a sequential fashion.

In terms of biological role, forms part of the ribosomal stalk, playing a central role in the interaction of the ribosome with GTP-bound translation factors. This Saccharolobus solfataricus (strain ATCC 35092 / DSM 1617 / JCM 11322 / P2) (Sulfolobus solfataricus) protein is Large ribosomal subunit protein uL10.